We begin with the raw amino-acid sequence, 127 residues long: Small ribosomal subunit protein eS8 (127 aa).

The segment at 1-24 is disordered; it reads MKWQGKSARKPTGGRLVPARGKRK.

The protein belongs to the eukaryotic ribosomal protein eS8 family. In terms of assembly, part of the 30S ribosomal subunit.

The protein is Small ribosomal subunit protein eS8 of Methanothrix thermoacetophila (strain DSM 6194 / JCM 14653 / NBRC 101360 / PT) (Methanosaeta thermophila).